The primary structure comprises 370 residues: tRNA-specific 2-thiouridylase MnmA (370 aa).

Residues Ala-24–Ser-31 and Leu-50 each bind ATP. Cys-118 functions as the Nucleophile in the catalytic mechanism. Cys-118 and Cys-214 are oxidised to a cystine. Gly-142 provides a ligand contact to ATP. Positions Lys-164–Gln-166 are interaction with tRNA. The active-site Cysteine persulfide intermediate is the Cys-214.

The protein belongs to the MnmA/TRMU family.

Its subcellular location is the cytoplasm. The enzyme catalyses S-sulfanyl-L-cysteinyl-[protein] + uridine(34) in tRNA + AH2 + ATP = 2-thiouridine(34) in tRNA + L-cysteinyl-[protein] + A + AMP + diphosphate + H(+). Functionally, catalyzes the 2-thiolation of uridine at the wobble position (U34) of tRNA, leading to the formation of s(2)U34. The chain is tRNA-specific 2-thiouridylase MnmA from Ehrlichia ruminantium (strain Welgevonden).